Consider the following 156-residue polypeptide: Small ribosomal subunit protein uS7 (156 aa).

It belongs to the universal ribosomal protein uS7 family. Part of the 30S ribosomal subunit. Contacts proteins S9 and S11.

In terms of biological role, one of the primary rRNA binding proteins, it binds directly to 16S rRNA where it nucleates assembly of the head domain of the 30S subunit. Is located at the subunit interface close to the decoding center, probably blocks exit of the E-site tRNA. This chain is Small ribosomal subunit protein uS7, found in Clostridium botulinum (strain Okra / Type B1).